Here is a 438-residue protein sequence, read N- to C-terminus: Putative ZDHHC-type palmitoyltransferase 7 (438 aa).

2 N-linked (GlcNAc...) asparagine glycosylation sites follow: Asn12 and Asn13. 2 helical membrane-spanning segments follow: residues Ile48–Leu68 and Tyr77–Ile97. Residues Asn119, Asn144, and Asn157 are each glycosylated (N-linked (GlcNAc...) asparagine). Residues Glu183–Asp239 are disordered. Composition is skewed to low complexity over residues Thr190–Ile206 and Asn218–Asn234. Asn231 is a glycosylation site (N-linked (GlcNAc...) asparagine). The region spanning Tyr249–Leu299 is the DHHC domain. The next 2 membrane-spanning stretches (helical) occupy residues Phe294–Thr314 and Ile330–Phe350. A glycan (N-linked (GlcNAc...) asparagine) is linked at Asn360.

The protein belongs to the DHHC palmitoyltransferase family.

It localises to the membrane. It catalyses the reaction L-cysteinyl-[protein] + hexadecanoyl-CoA = S-hexadecanoyl-L-cysteinyl-[protein] + CoA. This chain is Putative ZDHHC-type palmitoyltransferase 7, found in Dictyostelium discoideum (Social amoeba).